Here is a 258-residue protein sequence, read N- to C-terminus: Triosephosphate isomerase (258 aa).

9 to 11 provides a ligand contact to substrate; sequence NWK. The active-site Electrophile is the His105. Residue Glu176 is the Proton acceptor of the active site. Substrate is bound by residues Gly182 and Ser214.

It belongs to the triosephosphate isomerase family. In terms of assembly, homodimer.

Its subcellular location is the cytoplasm. It carries out the reaction D-glyceraldehyde 3-phosphate = dihydroxyacetone phosphate. Its pathway is carbohydrate biosynthesis; gluconeogenesis. It functions in the pathway carbohydrate degradation; glycolysis; D-glyceraldehyde 3-phosphate from glycerone phosphate: step 1/1. Involved in the gluconeogenesis. Catalyzes stereospecifically the conversion of dihydroxyacetone phosphate (DHAP) to D-glyceraldehyde-3-phosphate (G3P). In Mycoplasmopsis agalactiae (strain NCTC 10123 / CIP 59.7 / PG2) (Mycoplasma agalactiae), this protein is Triosephosphate isomerase.